Here is a 443-residue protein sequence, read N- to C-terminus: sn-2 acyl-lipid omega-3 desaturase (ferredoxin), chloroplastic (443 aa).

The transit peptide at 1-51 (MAGLVLSGCAIKPFSQSLPIPTKRFITNPSNINLLHPKDPIFSPNFHGFSR) directs the protein to the chloroplast. 2 consecutive transmembrane segments (helical) span residues 120 to 140 (MSYV…AAHL) and 143 to 163 (WLVW…LFVL). Positions 165-169 (HDCGH) match the Histidine box-1 motif. Residues 201-205 (HRTHH) carry the Histidine box-2 motif. Helical transmembrane passes span 281 to 301 (TICW…VGPV) and 304 to 324 (LKLY…VTYL). The Histidine box-3 motif lies at 368–372 (HVIHH).

It belongs to the fatty acid desaturase type 1 family. In terms of tissue distribution, highly expressed in leaves and cotyledons, while no or little expression detected in mature seeds, roots and stems.

Its subcellular location is the plastid. It localises to the chloroplast membrane. The catalysed reaction is a (7Z,10Z)-hexadecadienoyl-containing glycerolipid + 2 reduced [2Fe-2S]-[ferredoxin] + O2 + 2 H(+) = a (7Z,10Z,13Z)-hexadecatrienoyl-containing glycerolipid + 2 oxidized [2Fe-2S]-[ferredoxin] + 2 H2O. It carries out the reaction a (9Z,12Z)-octadecadienoyl-containing glycerolipid + 2 reduced [2Fe-2S]-[ferredoxin] + O2 + 2 H(+) = (9Z,12Z,15Z)-octadecatrienoyl-containing glycerolipid + 2 oxidized [2Fe-2S]-[ferredoxin] + 2 H2O. Its pathway is lipid metabolism; polyunsaturated fatty acid biosynthesis. Its function is as follows. Chloroplast omega-3 fatty acid desaturase introduces the third double bond in the biosynthesis of 18:3, and probably also 16:3 fatty acids, important constituents of plant membranes. It is thought to use ferredoxin as an electron donor and to act on fatty acids esterified to galactolipids, sulfolipids and phosphatidylglycerol. In Helianthus annuus (Common sunflower), this protein is sn-2 acyl-lipid omega-3 desaturase (ferredoxin), chloroplastic.